The chain runs to 218 residues: Protein-L-isoaspartate O-methyltransferase (218 aa).

Ser66 is an active-site residue.

It belongs to the methyltransferase superfamily. L-isoaspartyl/D-aspartyl protein methyltransferase family.

It is found in the cytoplasm. The enzyme catalyses [protein]-L-isoaspartate + S-adenosyl-L-methionine = [protein]-L-isoaspartate alpha-methyl ester + S-adenosyl-L-homocysteine. In terms of biological role, catalyzes the methyl esterification of L-isoaspartyl residues in peptides and proteins that result from spontaneous decomposition of normal L-aspartyl and L-asparaginyl residues. It plays a role in the repair and/or degradation of damaged proteins. The sequence is that of Protein-L-isoaspartate O-methyltransferase from Caulobacter sp. (strain K31).